A 1486-amino-acid polypeptide reads, in one-letter code: Chromosome partition protein MukB (1486 aa).

An ATP-binding site is contributed by 34 to 41 (GGNGAGKS). Coiled-coil stretches lie at residues 326 to 418 (LEAD…QYNQ), 444 to 480 (LETF…QAYQ), and 509 to 603 (RHLA…RAPV). The segment at 666 to 783 (PGGSEDQRLN…EVPLFGRAAR (118 aa)) is flexible hinge. Coiled-coil stretches lie at residues 835–923 (EAEI…AKLE), 977–1115 (EMLS…TAKA), and 1209–1266 (VEAI…QNVS).

This sequence belongs to the SMC family. MukB subfamily. Homodimerization via its hinge domain. Binds to DNA via its C-terminal region. Interacts, and probably forms a ternary complex, with MukE and MukF via its C-terminal region. The complex formation is stimulated by calcium or magnesium. Interacts with tubulin-related protein FtsZ.

Its subcellular location is the cytoplasm. The protein resides in the nucleoid. Functionally, plays a central role in chromosome condensation, segregation and cell cycle progression. Functions as a homodimer, which is essential for chromosome partition. Involved in negative DNA supercoiling in vivo, and by this means organize and compact chromosomes. May achieve or facilitate chromosome segregation by condensation DNA from both sides of a centrally located replisome during cell division. The sequence is that of Chromosome partition protein MukB from Escherichia coli O157:H7.